We begin with the raw amino-acid sequence, 511 residues long: DEP domain-containing protein 7 (511 aa).

One can recognise a DEP domain in the interval 46-136 (LQTQVEVKKR…SSCSLYRFTT (91 aa)).

This sequence belongs to the DEPDC7 family.

This Pongo abelii (Sumatran orangutan) protein is DEP domain-containing protein 7 (DEPDC7).